Here is a 705-residue protein sequence, read N- to C-terminus: Phosphoribosylformylglycinamidine synthase subunit PurL (705 aa).

His-32 is an active-site residue. Tyr-35 serves as a coordination point for ATP. Glu-76 contributes to the Mg(2+) binding site. Residues Ser-77–His-80 and Arg-99 contribute to the substrate site. The active-site Proton acceptor is His-78. Residue Asp-100 participates in Mg(2+) binding. Gln-224 provides a ligand contact to substrate. Asp-252 is a binding site for Mg(2+). Glu-296–Gln-298 serves as a coordination point for substrate. ATP-binding residues include Asp-471 and Gly-508. Asn-509 is a Mg(2+) binding site. Ser-511 serves as a coordination point for substrate.

It belongs to the FGAMS family. In terms of assembly, monomer. Part of the FGAM synthase complex composed of 1 PurL, 1 PurQ and 2 PurS subunits.

The protein localises to the cytoplasm. It catalyses the reaction N(2)-formyl-N(1)-(5-phospho-beta-D-ribosyl)glycinamide + L-glutamine + ATP + H2O = 2-formamido-N(1)-(5-O-phospho-beta-D-ribosyl)acetamidine + L-glutamate + ADP + phosphate + H(+). It participates in purine metabolism; IMP biosynthesis via de novo pathway; 5-amino-1-(5-phospho-D-ribosyl)imidazole from N(2)-formyl-N(1)-(5-phospho-D-ribosyl)glycinamide: step 1/2. Its function is as follows. Part of the phosphoribosylformylglycinamidine synthase complex involved in the purines biosynthetic pathway. Catalyzes the ATP-dependent conversion of formylglycinamide ribonucleotide (FGAR) and glutamine to yield formylglycinamidine ribonucleotide (FGAM) and glutamate. The FGAM synthase complex is composed of three subunits. PurQ produces an ammonia molecule by converting glutamine to glutamate. PurL transfers the ammonia molecule to FGAR to form FGAM in an ATP-dependent manner. PurS interacts with PurQ and PurL and is thought to assist in the transfer of the ammonia molecule from PurQ to PurL. The polypeptide is Phosphoribosylformylglycinamidine synthase subunit PurL (Pyrococcus horikoshii (strain ATCC 700860 / DSM 12428 / JCM 9974 / NBRC 100139 / OT-3)).